The chain runs to 487 residues: Anthocyanidin 3-O-glucosyltransferase 5 (487 aa).

His22 (proton acceptor) is an active-site residue. Position 22 (His22) interacts with an anthocyanidin. Asp119 (charge relay) is an active-site residue. Residues Gln354, His369, Trp372, Asn373, Ser374, and Glu377 each coordinate UDP-alpha-D-glucose. Ala392 contacts an anthocyanidin. Glu393 and Gln394 together coordinate UDP-alpha-D-glucose.

The protein belongs to the UDP-glycosyltransferase family. In terms of tissue distribution, faintly expressed in cotyledons.

It catalyses the reaction an anthocyanidin + UDP-alpha-D-glucose + H(+) = an anthocyanidin 3-O-beta-D-glucoside + UDP. The protein operates within pigment biosynthesis; anthocyanin biosynthesis. In terms of biological role, in the presence of other necessary color factors, this glycosylation reaction allows the accumulation of anthocyanin pigments. This Manihot esculenta (Cassava) protein is Anthocyanidin 3-O-glucosyltransferase 5 (GT5).